The following is a 441-amino-acid chain: MRQTNTHLETFSLFDDVCTCLLVDKVFYWSQIHKVRKLVDRSIERMESCSIINIITKYIIEQTDLDQAAKNILQFRELDPLLRRLSSTSLLAFTRHLKYYLSLYLPSCKFEICSTNQYFSSSKPEACVIARESINAGEDITDLCGTIIKLSPKEERNIGIGKDFSILHSSRLDSMCLFLGPARFVNHDCNANCRFNTSGKRIWLRCVRDIKPGEEITTFYSSNYFGLENCECLCVSCERMGINGFKKLFHTSATSTSCSSKSSSDVSDLSSLPQSNRYVISEEDRSFLNIWDSGGELSDASSSDLDEEFSLFIPRHKKRVWSREKRLLSEMAITNHSPLLNVDDYRKFREDLWKKRHGKRKVYQCSNCSQTFINEDIQNSSAFCPKCIRHSKLFSLPWPCRHKVNRELKLEKEKEINTKRNLVTSSHSMSLRHKKAVDYQS.

The region spanning Cys108 to Ser221 is the SET domain.

Belongs to the class V-like SAM-binding methyltransferase superfamily. Histone-lysine methyltransferase family. Suvar4-20 subfamily.

It localises to the nucleus. Its subcellular location is the chromosome. The catalysed reaction is L-lysyl(20)-[histone H4] + 3 S-adenosyl-L-methionine = N(6),N(6),N(6)-trimethyl-L-lysyl(20)-[histone H4] + 3 S-adenosyl-L-homocysteine + 3 H(+). Its function is as follows. Histone methyltransferase that specifically trimethylates 'Lys-20' of histone H4 to form H4K20me3. H4 'Lys-20' methylation is apparently not involved in the regulation of gene expression or heterochromatin function but participates in DNA damage response by giving a 'histone mark' required for the recruitment of the checkpoint protein Crb2 to sites of DNA damage. In Schizosaccharomyces pombe (strain 972 / ATCC 24843) (Fission yeast), this protein is Histone-lysine N-methyltransferase set9 (set9).